We begin with the raw amino-acid sequence, 254 residues long: 5-oxoprolinase subunit A (254 aa).

It belongs to the LamB/PxpA family. Forms a complex composed of PxpA, PxpB and PxpC.

It carries out the reaction 5-oxo-L-proline + ATP + 2 H2O = L-glutamate + ADP + phosphate + H(+). Catalyzes the cleavage of 5-oxoproline to form L-glutamate coupled to the hydrolysis of ATP to ADP and inorganic phosphate. This Acinetobacter baumannii (strain AB307-0294) protein is 5-oxoprolinase subunit A.